The chain runs to 757 residues: Protein hunchback (757 aa).

Disordered regions lie at residues 30-51 (EPGH…PIPS) and 171-213 (EKLQ…EDMK). Positions 39 to 51 (SVASSPRQSPIPS) are enriched in polar residues. Positions 197–213 (EPEKEHDQMSNSSEDMK) are enriched in basic and acidic residues. 4 C2H2-type zinc fingers span residues 239-261 (YKCK…TRTH), 268-290 (LQCP…IRKH), 296-318 (FQCD…RKSH), and 324-348 (YRCA…KYGH). Disordered regions lie at residues 367-416 (DVYG…VATS), 511-535 (EQLQ…YERK), and 602-694 (MTSP…APPS). Composition is skewed to low complexity over residues 397 to 414 (VAAV…QPVA) and 512 to 521 (QLQQQNQQQS). Acidic residues predominate over residues 522–531 (DNEEEDQDDE). Low complexity predominate over residues 651–694 (ANTSASSTASSSGNSSNASSNSNGNSSSNSSSNGTTSAVAAPPS). 2 C2H2-type zinc fingers span residues 704-726 (YECK…MGYH) and 732-756 (FKCN…RNAH).

Belongs to the hunchback C2H2-type zinc-finger protein family.

It is found in the nucleus. Gap class segmentation protein that controls development of head structures. The protein is Protein hunchback (hb) of Drosophila sechellia (Fruit fly).